The sequence spans 90 residues: Putative ATPase inhibitor, mitochondrial (90 aa).

Residues 42-89 adopt a coiled-coil conformation; it reads ESREKAKEDFFVHQHEIEQLRKLKESLKLHREELDELESRVDKKMKSN.

This sequence belongs to the ATPase inhibitor family.

It localises to the mitochondrion. Functionally, forms a one-to-one complex with ATPase to inhibit the enzyme activity completely. The chain is Putative ATPase inhibitor, mitochondrial (inh1) from Schizosaccharomyces pombe (strain 972 / ATCC 24843) (Fission yeast).